Reading from the N-terminus, the 902-residue chain is 4-hydroxyphenylacetate decarboxylase glycyl radical subunit (902 aa).

In terms of domain architecture, PFL spans 38–774 (KRAEDLLDVY…ATLATPDGRL (737 aa)). 4-hydroxyphenylacetate contacts are provided by serine 348 and cysteine 507. The active-site Cysteine radical intermediate is cysteine 507. Glutamate 509 functions as the Proton donor in the catalytic mechanism. Positions 540 and 641 each coordinate 4-hydroxyphenylacetate. Positions 782–902 (GSVSAYAGTD…VIARTEYEGV (121 aa)) constitute a Glycine radical domain. Glycine 877 carries the post-translational modification Glycine radical.

This sequence belongs to the glycyl radical enzyme (GRE) family. HPAD subfamily. As to quaternary structure, heterooctamer consisting of 4 large (HpdB) subunits and 4 small (HpdC) subunits. Also forms a catalytically inactive homodimer. In terms of processing, phosphorylated on serine. Phosphorylation may trigger the formation of the active heterooctamers and thereby regulates enzyme activity. Requires the activating protein HpdA to generate the key active site glycyl radical that is involved in catalysis.

It carries out the reaction 4-hydroxyphenylacetate + H(+) = 4-methylphenol + CO2. It catalyses the reaction 3,4-dihydroxyphenylacetate + H(+) = 4-methylcatechol + CO2. The enzyme catalyses 2-hydroxy-2-(4-hydroxyphenyl)acetate + H(+) = 4-hydroxybenzyl alcohol + CO2. Its activity is regulated as follows. Enzyme activity catalyzed by the HPA decarboxylase complex is rapidly and irreversibly inactivated by oxygen. Competitively inhibited by p-hydroxyphenylacetamide. Not inhibited by m- or o-hydroxyphenyl-acetate, p-hydroxybenzoate or p-hydroxyphenylpropionate. Glycyl radical subunit of the HPA decarboxylase that decarboxylates phenylacetates with a hydroxyl group in the p-position. Active toward 4-hydroxyphenylacetate, 3,4-dihydroxyphenylacetate and to a lesser extent p-hydroxymandelate (2-hydroxy-2-(4-hydroxyphenyl)acetate), forming 4-methylphenol, 4-methylcatechol and 4-hydroxybenzylalcohol, respectively. Is likely involved in the catabolism of aromatic amino acids such as tyrosine fermentation. 4-methylphenol (p-cresol) formation provides metabolic toxicity, which may benefit the pathogen C.difficile by suppression of the endogenous gastrointestinal microflora, allowing the development of gastrointestinal infections. The large subunit is the catalytic subunit that binds the substrate. This chain is 4-hydroxyphenylacetate decarboxylase glycyl radical subunit, found in Clostridioides difficile (Peptoclostridium difficile).